Reading from the N-terminus, the 204-residue chain is Putative 3-methyladenine DNA glycosylase (204 aa).

This sequence belongs to the DNA glycosylase MPG family.

This is Putative 3-methyladenine DNA glycosylase from Bacillus cytotoxicus (strain DSM 22905 / CIP 110041 / 391-98 / NVH 391-98).